Here is a 383-residue protein sequence, read N- to C-terminus: Izumo sperm-egg fusion protein 1 (383 aa).

An N-terminal signal peptide occupies residues 1 to 21; sequence MGLHFTLLLAALANCLCPARL. Intrachain disulfides connect Cys22/Cys149, Cys25/Cys152, Cys135/Cys159, Cys139/Cys165, and Cys182/Cys233. The Extracellular segment spans residues 22–306; it reads CIICDPFVVA…HRPEKKLKSR (285 aa). The tract at residues 148–160 is important for interaction with IZUMO1R; sequence WCNKCEKQMHFCR. The Ig-like C2-type domain occupies 167-251; the sequence is ERQIEVHRLE…PATIIYYHVT (85 aa). Asn204 is a glycosylation site (N-linked (GlcNAc...) asparagine). The helical transmembrane segment at 307 to 327 threads the bilayer; sequence LLILLILGFVVLVASVIASVL. The Cytoplasmic portion of the chain corresponds to 328–383; it reads HFRKTRVKSKNSNVENKTSAAEFKSEAESPQKMGSRKLSQAEFHTDSSDKVEEADN. The segment at 335 to 383 is disordered; it reads KSKNSNVENKTSAAEFKSEAESPQKMGSRKLSQAEFHTDSSDKVEEADN. Polar residues predominate over residues 337–346; sequence KNSNVENKTS. Residues Ser339, Ser346, and Ser366 each carry the phosphoserine modification. The span at 370–383 shows a compositional bias: basic and acidic residues; the sequence is FHTDSSDKVEEADN. Thr372 is subject to Phosphothreonine.

It belongs to the Izumo family. As to quaternary structure, monomer, homodimer; disulfide-linked and homooligomer; depending on the context. Interacts with IZUMO1R/JUNO. IZUMO1 and IZUMO1R/JUNO form a complex with 1:1 stoichiometry. In gamete recognition, IZUMO1R/JUNO first binds to monomeric IZUMO1. The weak, but specific interaction with IZUMO1R/JUNO induces IZUMO1 homodimerization. The process follows a tight binding phase where IZUMO1 bends the entire structure towards the sperm membrane side through a thiol-disulfide exchange reaction. The molecule no longer binds to IZUMO1R/JUNO and instead binds to a putative second oocyte receptor. Interacts with ACE3. Part of a oolemmal binding multimeric complex (IZUMO1 complex) composed at least of IZUMO1 and GLIPR1L1; the complex assemblage is influenced by the maturation status of the male germ cell. Interacts with GLIPR1L1. Interacts with FREY; the interaction retains IZUMO1 at the endoplasmic reticulum membrane and coordinates IZUMO1 complex assembly. Interacts with WDR54. Forms a complex with SPACA6 and TMEM81 on spermatocyte cell membrane. N-glycosylated. Glycosylation is not essential for fusion and for proper protein trafficking in sperm. In terms of processing, phosphorylated. The cytoplasmic C-terminus is phosphorylated and undergoes phosphorylation changes during epididymal transit. In terms of tissue distribution, expressed in sperm (at protein level).

Its subcellular location is the cell membrane. It is found in the cytoplasmic vesicle. The protein resides in the secretory vesicle. It localises to the acrosome membrane. Functionally, essential sperm cell-surface protein required for fertilization by acting as a ligand for IZUMO1R/JUNO receptor on egg. The IZUMO1:IZUMO1R/JUNO interaction is a necessary adhesion event between sperm and egg that is required for fertilization but is not sufficient for cell fusion. The ligand-receptor interaction probably does not act as a membrane 'fusogen'. Plays a critical role in sperm-oolemma binding prior to plasma membrane fusion. Can mediate cell-cell fusion in cultured mammalian cells independently of its binding to IZUMO1R/JUNO. This Rattus norvegicus (Rat) protein is Izumo sperm-egg fusion protein 1.